The chain runs to 557 residues: Selenoprotein N (557 aa).

A compositionally biased stretch (basic and acidic residues) spans 1–21; sequence MAADVDKTPAGEQKDDHEDRG. The disordered stretch occupies residues 1 to 28; that stretch reads MAADVDKTPAGEQKDDHEDRGTPSSRRG. A helical transmembrane segment spans residues 35–55; the sequence is ISSLFIIAAIPVIGVCIKYYL. A non-standard amino acid (selenocysteine) is located at residue Sec430. N-linked (GlcNAc...) asparagine glycans are attached at residues Asn451 and Asn499.

As to quaternary structure, interacts with ryr3.

The protein localises to the endoplasmic reticulum membrane. Plays an important role in cell protection against oxidative stress and in the regulation of redox-related calcium homeostasis. Regulates the calcium level of the ER by protecting the calcium pump ATP2A2 against the oxidoreductase ERO1A-mediated oxidative damage. Acts as a modulator of ryanodine receptor (RyR) activity: protects RyR from oxidation due to increased oxidative stress, or directly controls the RyR redox state, regulating the RyR-mediated calcium mobilization required for normal muscle development and differentiation. Plays an important role in muscle development and differentiation during early development. Required for development of the slow muscle fiber lineage. Required for the correct organization and attachment of the myofibrils, as well as for the continuity and integrity of the connective tissue that forms the myoseptum. This chain is Selenoprotein N, found in Danio rerio (Zebrafish).